We begin with the raw amino-acid sequence, 373 residues long: Cytoplasmic tRNA 2-thiolation protein 1 (373 aa).

Belongs to the TtcA family. CTU1/NCS6/ATPBD3 subfamily.

The protein localises to the cytoplasm. The protein operates within tRNA modification; 5-methoxycarbonylmethyl-2-thiouridine-tRNA biosynthesis. Plays a central role in 2-thiolation of mcm(5)S(2)U at tRNA wobble positions of tRNA(Lys), tRNA(Glu) and tRNA(Gln). Directly binds tRNAs and probably acts by catalyzing adenylation of tRNAs, an intermediate required for 2-thiolation. It is unclear whether it acts as a sulfurtransferase that transfers sulfur from thiocarboxylated URM1 onto the uridine of tRNAs at wobble position. The chain is Cytoplasmic tRNA 2-thiolation protein 1 from Caenorhabditis elegans.